A 255-amino-acid chain; its full sequence is MSFNNQESENLPTFADQKRKTVEVAEFTAEGRYKRKVRSFVLRTGRLSEFQKNAMNQHWGFYGLEHQNQPFDFPAIYGNNNPVVLEIGFGMGHSLVDMALQNPERNYLGIEVHTPGVGACIAYAVEKGVKNLRIICHDATEILRDCIADHSLGGLQLFFPDPWHKAKHHKRRIVQPQFVNTITQKLTTGGFIHMATDWENYAEHMLAVLQQAEGLQNTSATHDYIPRPDFRPLTKFEQRGHRLGHGVWDLYYIKK.

4 residues coordinate S-adenosyl-L-methionine: Glu-86, Glu-111, Asp-138, and Asp-161. Asp-161 is an active-site residue. Residues Lys-165, Asp-197, and 234–237 (TKFE) contribute to the substrate site.

The protein belongs to the class I-like SAM-binding methyltransferase superfamily. TrmB family.

The enzyme catalyses guanosine(46) in tRNA + S-adenosyl-L-methionine = N(7)-methylguanosine(46) in tRNA + S-adenosyl-L-homocysteine. The protein operates within tRNA modification; N(7)-methylguanine-tRNA biosynthesis. Functionally, catalyzes the formation of N(7)-methylguanine at position 46 (m7G46) in tRNA. The protein is tRNA (guanine-N(7)-)-methyltransferase of Pasteurella multocida (strain Pm70).